We begin with the raw amino-acid sequence, 168 residues long: Gamma-glutamylaminecyclotransferase (168 aa).

The tract at residues 1-20 is disordered; sequence MPGPECKWSTTETGAPCGTD. 32-35 is a binding site for substrate; it reads YGTL. The active-site Proton acceptor is the glutamate 107.

It belongs to the gamma-glutamylcyclotransferase family. In terms of assembly, monomer.

The catalysed reaction is epsilon-(gamma-L-glutamyl)-L-lysine = 5-oxo-L-proline + L-lysine. Contributes to degradation of proteins cross-linked by transglutaminases by degrading the cross-link between a lysine and a glutamic acid residue. Catalyzes the formation of 5-oxo-L-proline from L-gamma-glutamyl-L-epsilon-lysine. Inactive with L-gamma-glutamyl-alpha-amino acid substrates such as L-gamma-glutamyl-L-alpha-cysteine and L-gamma-glutamyl-L-alpha-alanine. This is Gamma-glutamylaminecyclotransferase (GGACT) from Bos taurus (Bovine).